Reading from the N-terminus, the 195-residue chain is Holliday junction branch migration complex subunit RuvA (195 aa).

The interval 1-63 is domain I; that stretch reads MIASVRGEVI…EDSMTLYGFV (63 aa). Residues 64 to 142 are domain II; sequence DGDARDLFLT…PVSAGGGAAV (79 aa). Positions 143–150 are flexible linker; the sequence is GGHAIRGP. The domain III stretch occupies residues 150 to 195; that stretch reads PVVEALVGLGFAAKQAEEATDKVLANDPEATTSSALRAALSMLGKK.

It belongs to the RuvA family. Homotetramer. Forms an RuvA(8)-RuvB(12)-Holliday junction (HJ) complex. HJ DNA is sandwiched between 2 RuvA tetramers; dsDNA enters through RuvA and exits via RuvB. An RuvB hexamer assembles on each DNA strand where it exits the tetramer. Each RuvB hexamer is contacted by two RuvA subunits (via domain III) on 2 adjacent RuvB subunits; this complex drives branch migration. In the full resolvosome a probable DNA-RuvA(4)-RuvB(12)-RuvC(2) complex forms which resolves the HJ.

The protein resides in the cytoplasm. In terms of biological role, the RuvA-RuvB-RuvC complex processes Holliday junction (HJ) DNA during genetic recombination and DNA repair, while the RuvA-RuvB complex plays an important role in the rescue of blocked DNA replication forks via replication fork reversal (RFR). RuvA specifically binds to HJ cruciform DNA, conferring on it an open structure. The RuvB hexamer acts as an ATP-dependent pump, pulling dsDNA into and through the RuvAB complex. HJ branch migration allows RuvC to scan DNA until it finds its consensus sequence, where it cleaves and resolves the cruciform DNA. The sequence is that of Holliday junction branch migration complex subunit RuvA from Mycolicibacterium smegmatis (strain ATCC 700084 / mc(2)155) (Mycobacterium smegmatis).